An 874-amino-acid polypeptide reads, in one-letter code: Alanine--tRNA ligase (874 aa).

Histidine 562, histidine 566, cysteine 664, and histidine 668 together coordinate Zn(2+).

Belongs to the class-II aminoacyl-tRNA synthetase family. The cofactor is Zn(2+).

It localises to the cytoplasm. It catalyses the reaction tRNA(Ala) + L-alanine + ATP = L-alanyl-tRNA(Ala) + AMP + diphosphate. Functionally, catalyzes the attachment of alanine to tRNA(Ala) in a two-step reaction: alanine is first activated by ATP to form Ala-AMP and then transferred to the acceptor end of tRNA(Ala). Also edits incorrectly charged Ser-tRNA(Ala) and Gly-tRNA(Ala) via its editing domain. The chain is Alanine--tRNA ligase from Neisseria meningitidis serogroup B (strain ATCC BAA-335 / MC58).